An 85-amino-acid chain; its full sequence is UPF0291 protein str0508 (85 aa).

The segment at 62–85 is disordered; that stretch reads TPEKLRQVQREKGLHGRSLDDPES.

This sequence belongs to the UPF0291 family.

Its subcellular location is the cytoplasm. This Streptococcus thermophilus (strain CNRZ 1066) protein is UPF0291 protein str0508.